The primary structure comprises 675 residues: Polyphosphate kinase (675 aa).

Position 42 (asparagine 42) interacts with ATP. Positions 372 and 401 each coordinate Mg(2+). Residue histidine 431 is the Phosphohistidine intermediate of the active site. ATP-binding residues include tyrosine 464, arginine 558, and histidine 586.

It belongs to the polyphosphate kinase 1 (PPK1) family. Mg(2+) serves as cofactor. An intermediate of this reaction is the autophosphorylated ppk in which a phosphate is covalently linked to a histidine residue through a N-P bond.

The enzyme catalyses [phosphate](n) + ATP = [phosphate](n+1) + ADP. Its function is as follows. Catalyzes the reversible transfer of the terminal phosphate of ATP to form a long-chain polyphosphate (polyP). This Helicobacter pylori (strain ATCC 700392 / 26695) (Campylobacter pylori) protein is Polyphosphate kinase.